A 104-amino-acid polypeptide reads, in one-letter code: MIVTTTNSVEGYQISEYKGIVVGEAIMGANVVRDVFAQITDIVGGRSGAYESKLQDARETALSELEDRARALGANAVVGVDLDYEVVGQSMLMVSASGTAVVIG.

Belongs to the UPF0145 family.

The sequence is that of UPF0145 protein TM1040_1243 from Ruegeria sp. (strain TM1040) (Silicibacter sp.).